We begin with the raw amino-acid sequence, 322 residues long: Germ cell-specific gene 1-like protein (322 aa).

Topologically, residues 1 to 8 (MKTSRRGR) are cytoplasmic. Residues 9–29 (ALLAVALNLLALLFATTAFLT) traverse the membrane as a helical segment. Over 30–122 (TYWCQGTQRV…FIDLAPASEK (93 aa)) the chain is Extracellular. Residues 123–143 (GVLWLSVVSEVLYILLLVVGF) traverse the membrane as a helical segment. The Cytoplasmic portion of the chain corresponds to 144-163 (SLMCLELVHSSSVIDGLKLN). A helical membrane pass occupies residues 164–184 (AFAAVFTVLSGLLGMVAHMMY). The Extracellular portion of the chain corresponds to 185–207 (TQVFQVTVSLGPEDWRPHSWDYG). The helical transmembrane segment at 208–228 (WSFCLAWGSFTCCMAASVTTL) threads the bilayer. The Cytoplasmic segment spans residues 229–322 (NSYTKTVIEF…RQCWVLGHWV (94 aa)). Residue S274 is modified to Phosphoserine.

This sequence belongs to the GSG1 family. Component of the inner core of AMPAR complexes. AMPAR complexes consist of an inner core made of 4 pore-forming GluA/GRIA proteins (GRIA1, GRIA2, GRIA3 and GRIA4) and 4 major auxiliary subunits arranged in a twofold symmetry. One of the two pairs of distinct binding sites is occupied either by CNIH2, CNIH3 or CACNG2, CACNG3. The other harbors CACNG2, CACNG3, CACNG4, CACNG8 or GSG1L. This inner core of AMPAR complexes is complemented by outer core constituents binding directly to the GluA/GRIA proteins at sites distinct from the interaction sites of the inner core constituents. Outer core constituents include at least PRRT1, PRRT2, CKAMP44/SHISA9, FRRS1L and NRN1. The proteins of the inner and outer core serve as a platform for other, more peripherally associated AMPAR constituents. Alone or in combination, these auxiliary subunits control the gating and pharmacology of the AMPAR complexes and profoundly impact their biogenesis and protein processing. As to expression, expressed in the brain, including hippocampus (at protein level).

The protein resides in the cell membrane. Its subcellular location is the synapse. As a component of the inner core of AMPAR complexes, modifies AMPA receptor (AMPAR) gating. The polypeptide is Germ cell-specific gene 1-like protein (Gsg1l) (Mus musculus (Mouse)).